Consider the following 140-residue polypeptide: 3-hydroxyacyl-[acyl-carrier-protein] dehydratase FabZ (140 aa).

Histidine 47 is an active-site residue.

It belongs to the thioester dehydratase family. FabZ subfamily.

It is found in the cytoplasm. The catalysed reaction is a (3R)-hydroxyacyl-[ACP] = a (2E)-enoyl-[ACP] + H2O. Involved in unsaturated fatty acids biosynthesis. Catalyzes the dehydration of short chain beta-hydroxyacyl-ACPs and long chain saturated and unsaturated beta-hydroxyacyl-ACPs. This chain is 3-hydroxyacyl-[acyl-carrier-protein] dehydratase FabZ, found in Streptococcus equi subsp. equi (strain 4047).